The sequence spans 431 residues: tRNA(Ile)-lysidine synthase (431 aa).

Position 19–24 (19–24 (STGIDS)) interacts with ATP.

Belongs to the tRNA(Ile)-lysidine synthase family.

The protein localises to the cytoplasm. The catalysed reaction is cytidine(34) in tRNA(Ile2) + L-lysine + ATP = lysidine(34) in tRNA(Ile2) + AMP + diphosphate + H(+). Ligates lysine onto the cytidine present at position 34 of the AUA codon-specific tRNA(Ile) that contains the anticodon CAU, in an ATP-dependent manner. Cytidine is converted to lysidine, thus changing the amino acid specificity of the tRNA from methionine to isoleucine. The sequence is that of tRNA(Ile)-lysidine synthase from Staphylococcus aureus (strain Mu50 / ATCC 700699).